A 214-amino-acid chain; its full sequence is Homologous-pairing protein 2 homolog (214 aa).

The stretch at 79–147 (SDSELKDLDA…EHKLTNIKSA (69 aa)) forms a coiled coil. The interval 115-179 (TSSLTTEEML…WKKRKRMATD (65 aa)) is DNA-binding.

Belongs to the HOP2 family.

The protein localises to the nucleus. Functionally, plays an important role in meiotic recombination. Stimulates DMC1-mediated strand exchange required for pairing of homologous chromosomes during meiosis. The chain is Homologous-pairing protein 2 homolog (psmc3ip) from Xenopus laevis (African clawed frog).